The primary structure comprises 96 residues: Co-chaperonin GroES (96 aa).

This sequence belongs to the GroES chaperonin family. Heptamer of 7 subunits arranged in a ring. Interacts with the chaperonin GroEL.

It localises to the cytoplasm. Its function is as follows. Together with the chaperonin GroEL, plays an essential role in assisting protein folding. The GroEL-GroES system forms a nano-cage that allows encapsulation of the non-native substrate proteins and provides a physical environment optimized to promote and accelerate protein folding. GroES binds to the apical surface of the GroEL ring, thereby capping the opening of the GroEL channel. This chain is Co-chaperonin GroES, found in Haemophilus influenzae (strain PittGG).